We begin with the raw amino-acid sequence, 196 residues long: Guanylate kinase (196 aa).

In terms of domain architecture, Guanylate kinase-like spans Gly8–Tyr189. Position 15 to 22 (Gly15 to Lys22) interacts with ATP.

The protein belongs to the guanylate kinase family.

The protein localises to the cytoplasm. The catalysed reaction is GMP + ATP = GDP + ADP. Its function is as follows. Essential for recycling GMP and indirectly, cGMP. The protein is Guanylate kinase of Malacoplasma penetrans (strain HF-2) (Mycoplasma penetrans).